Here is a 493-residue protein sequence, read N- to C-terminus: Ribulose bisphosphate carboxylase large chain (493 aa).

Substrate-binding residues include N132 and T182. K184 acts as the Proton acceptor in catalysis. Residue K186 participates in substrate binding. Residues K210, D212, and E213 each contribute to the Mg(2+) site. K210 carries the post-translational modification N6-carboxylysine. H302 serves as the catalytic Proton acceptor. Residues R303, H335, and S387 each contribute to the substrate site.

Belongs to the RuBisCO large chain family. Type I subfamily. Heterohexadecamer of 8 large chains and 8 small chains. Mg(2+) serves as cofactor.

The catalysed reaction is 2 (2R)-3-phosphoglycerate + 2 H(+) = D-ribulose 1,5-bisphosphate + CO2 + H2O. The enzyme catalyses D-ribulose 1,5-bisphosphate + O2 = 2-phosphoglycolate + (2R)-3-phosphoglycerate + 2 H(+). Functionally, ruBisCO catalyzes two reactions: the carboxylation of D-ribulose 1,5-bisphosphate, the primary event in carbon dioxide fixation, as well as the oxidative fragmentation of the pentose substrate. Both reactions occur simultaneously and in competition at the same active site. The sequence is that of Ribulose bisphosphate carboxylase large chain from Acidiphilium cryptum (strain JF-5).